The primary structure comprises 56 residues: Small ribosomal subunit protein uS14 (56 aa).

C21, C24, C39, and C42 together coordinate Zn(2+).

Belongs to the universal ribosomal protein uS14 family. As to quaternary structure, component of the 40S small ribosomal subunit. Zn(2+) is required as a cofactor.

The protein resides in the cytoplasm. It is found in the cytosol. The protein localises to the rough endoplasmic reticulum. This chain is Small ribosomal subunit protein uS14 (RpS29), found in Scarabaeus laticollis (Scarab dung beetle).